A 313-amino-acid chain; its full sequence is Porphobilinogen deaminase (313 aa).

Cys242 is subject to S-(dipyrrolylmethanemethyl)cysteine.

This sequence belongs to the HMBS family. Monomer. It depends on dipyrromethane as a cofactor.

The catalysed reaction is 4 porphobilinogen + H2O = hydroxymethylbilane + 4 NH4(+). Its pathway is porphyrin-containing compound metabolism; protoporphyrin-IX biosynthesis; coproporphyrinogen-III from 5-aminolevulinate: step 2/4. Tetrapolymerization of the monopyrrole PBG into the hydroxymethylbilane pre-uroporphyrinogen in several discrete steps. In Escherichia coli (strain SE11), this protein is Porphobilinogen deaminase.